Reading from the N-terminus, the 1347-residue chain is Ubinuclein-2 (1347 aa).

Residues 1 to 134 (MAEPRRVAFI…ETVRLELVLK (134 aa)) form a disordered region. Ser13 carries the post-translational modification Phosphoserine. 2 stretches are compositionally biased toward basic and acidic residues: residues 16–37 (RRRE…EPPR) and 67–79 (SREK…EVSR). Pro residues predominate over residues 93–110 (PEPPPPFPPLPLQPPPPR). Basic and acidic residues predominate over residues 122 to 134 (PPRETVRLELVLK). Phosphothreonine is present on Thr243. At Ser250 the chain carries Phosphoserine. Residues 250 to 301 (SDTEEDDITDNQKHKPPKVPKIKEDDIEMKKRKRKEEGEKEKKPRKKVPKQL) are disordered. Thr252 carries the phosphothreonine modification. Lys272 participates in a covalent cross-link: Glycyl lysine isopeptide (Lys-Gly) (interchain with G-Cter in SUMO2). Residues Ser311, Ser416, Ser419, Ser422, and Ser584 each carry the phosphoserine modification. Disordered regions lie at residues 573–597 (LQTD…KRVI), 707–740 (ECSP…AAAS), 815–849 (LATP…DLAH), 880–913 (GLQR…HALG), 981–1006 (RLPL…TVPS), and 1035–1218 (ASPK…SSVV). Residues 574–584 (QTDEEREKNGS) show a composition bias toward basic and acidic residues. Positions 721 to 740 (VASVSGPPTSSSTAAIAAAS) are enriched in low complexity. The span at 823–832 (STQTTHSSSL) shows a compositional bias: polar residues. Low complexity predominate over residues 880–911 (GLQRSSQIHTSSSSQTHVSSSSQAQIAASSHA). Residues 985 to 996 (STPSPGNGSQGS) show a composition bias toward polar residues. Residues 1035-1045 (ASPKLAASPKP) show a composition bias toward low complexity. Residues 1046–1060 (ATSPKPLPSPKPSAS) show a composition bias toward pro residues. 2 stretches are compositionally biased toward low complexity: residues 1061 to 1070 (PKPSLSAKPS) and 1077 to 1095 (SKSN…SSPN). An N6-acetyllysine modification is found at Lys1068. 2 stretches are compositionally biased toward polar residues: residues 1101-1164 (GSHS…NSLS) and 1174-1185 (RGSNLNSSGANR). A Phosphoserine modification is found at Ser1123. Lys1148 bears the N6-acetyllysine mark.

Belongs to the ubinuclein family. Expressed in several cell lines tested, including primary and transformed cell lines.

This chain is Ubinuclein-2 (UBN2), found in Homo sapiens (Human).